A 400-amino-acid chain; its full sequence is Hyaluronidase (400 aa).

An N-terminal signal peptide occupies residues 1–19 (MQTILVLTTFLSAWFLAVG). 5 cysteine pairs are disulfide-bonded: C31–C319, C196–C209, C344–C355, C349–C384, and C386–C395. E120 serves as the catalytic Proton donor. N-linked (GlcNAc...) asparagine glycans are attached at residues N129 and N166. N243 and N275 each carry an N-linked (GlcNAc...) asparagine glycan. The EGF-like domain maps to 340–396 (NVARCSKQACSGRGRCTWPKDTSVIAWKFLVEKEDYDFYLGDIECKCVEGYEGRYCE).

The protein belongs to the glycosyl hydrolase 56 family. As to quaternary structure, monomer. Expressed by the venom gland.

It localises to the secreted. The enzyme catalyses Random hydrolysis of (1-&gt;4)-linkages between N-acetyl-beta-D-glucosamine and D-glucuronate residues in hyaluronate.. Its function is as follows. Spider venom endo-hyaluronidase that is able to degrade purified hyaluronic acid (HA) and chondroitin sulfate (CS). Has no activity on dermatan sulfate (DS) and heparan sulfate (HS). Also increases the dermonecrotic effect of the dermonecrotic toxin (AC P0CE80), when injected in rabbit skin, supporting the hypothesis that venom hyaluronidases are spreading factors. The polypeptide is Hyaluronidase (Loxosceles intermedia (Brown spider)).